Consider the following 299-residue polypeptide: Pyridoxal kinase PdxY (299 aa).

S18 contributes to the substrate binding site. Residues D120 and E157 each contribute to the ATP site. D235 serves as a coordination point for substrate.

The protein belongs to the pyridoxine kinase family. PdxY subfamily. Homodimer. The cofactor is Mg(2+).

The catalysed reaction is pyridoxal + ATP = pyridoxal 5'-phosphate + ADP + H(+). It participates in cofactor metabolism; pyridoxal 5'-phosphate salvage; pyridoxal 5'-phosphate from pyridoxal: step 1/1. Functionally, pyridoxal kinase involved in the salvage pathway of pyridoxal 5'-phosphate (PLP). Catalyzes the phosphorylation of pyridoxal to PLP. The protein is Pyridoxal kinase PdxY of Deinococcus geothermalis (strain DSM 11300 / CIP 105573 / AG-3a).